Here is a 33-residue protein sequence, read N- to C-terminus: Photosystem II reaction center protein T (33 aa).

The helical transmembrane segment at 3-23 (ALVYTFLLVSTLGIIFFAIFF) threads the bilayer.

The protein belongs to the PsbT family. In terms of assembly, PSII is composed of 1 copy each of membrane proteins PsbA, PsbB, PsbC, PsbD, PsbE, PsbF, PsbH, PsbI, PsbJ, PsbK, PsbL, PsbM, PsbT, PsbY, PsbZ, Psb30/Ycf12, at least 3 peripheral proteins of the oxygen-evolving complex and a large number of cofactors. It forms dimeric complexes.

Its subcellular location is the plastid. The protein localises to the chloroplast thylakoid membrane. Functionally, found at the monomer-monomer interface of the photosystem II (PS II) dimer, plays a role in assembly and dimerization of PSII. PSII is a light-driven water plastoquinone oxidoreductase, using light energy to abstract electrons from H(2)O, generating a proton gradient subsequently used for ATP formation. The protein is Photosystem II reaction center protein T of Helianthus annuus (Common sunflower).